The sequence spans 177 residues: Large ribosomal subunit protein uL6 (177 aa).

The protein belongs to the universal ribosomal protein uL6 family. Part of the 50S ribosomal subunit.

Functionally, this protein binds to the 23S rRNA, and is important in its secondary structure. It is located near the subunit interface in the base of the L7/L12 stalk, and near the tRNA binding site of the peptidyltransferase center. The sequence is that of Large ribosomal subunit protein uL6 from Brucella anthropi (strain ATCC 49188 / DSM 6882 / CCUG 24695 / JCM 21032 / LMG 3331 / NBRC 15819 / NCTC 12168 / Alc 37) (Ochrobactrum anthropi).